The sequence spans 117 residues: Movement and RNA silencing protein (117 aa).

Residues 15–35 (FLFFGAIFIAITILYILLVLL) form a helical membrane-spanning segment. The interval 83–117 (RDQEPAVIPHVSQVIPSQPNRRDDQGRRGNAGPMF) is disordered.

It is found in the host cell membrane. In terms of biological role, transports viral genome to neighboring plant cells directly through plasmosdesmata, without any budding. The movement protein allows efficient cell to cell propagation, by bypassing the host cell wall barrier. Begomovirus genome is shuttled out of nucleus by Nuclear shuttle protein (NSP) and the movement protein transports the DNA-NSP complex to cell plasmodesmata and facilitates further movement across the cell wall. Acts as a suppressor of RNA-mediated gene silencing, also known as post-transcriptional gene silencing (PTGS), a mechanism of plant viral defense that limits the accumulation of viral RNAs. In Banana bunchy top virus (isolate Autralia) (BBTV), this protein is Movement and RNA silencing protein (DNA-M).